The chain runs to 383 residues: Succinyl-diaminopimelate desuccinylase (383 aa).

His-72 provides a ligand contact to Zn(2+). The active site involves Asp-74. Residue Asp-105 coordinates Zn(2+). Catalysis depends on Glu-137, which acts as the Proton acceptor. Positions 138, 167, and 352 each coordinate Zn(2+).

Belongs to the peptidase M20A family. DapE subfamily. In terms of assembly, homodimer. Zn(2+) serves as cofactor. The cofactor is Co(2+).

The enzyme catalyses N-succinyl-(2S,6S)-2,6-diaminopimelate + H2O = (2S,6S)-2,6-diaminopimelate + succinate. Its pathway is amino-acid biosynthesis; L-lysine biosynthesis via DAP pathway; LL-2,6-diaminopimelate from (S)-tetrahydrodipicolinate (succinylase route): step 3/3. Its function is as follows. Catalyzes the hydrolysis of N-succinyl-L,L-diaminopimelic acid (SDAP), forming succinate and LL-2,6-diaminopimelate (DAP), an intermediate involved in the bacterial biosynthesis of lysine and meso-diaminopimelic acid, an essential component of bacterial cell walls. The chain is Succinyl-diaminopimelate desuccinylase from Ehrlichia ruminantium (strain Welgevonden).